The chain runs to 302 residues: Putative glycine N-acyltransferase-like protein 1B (302 aa).

The protein belongs to the glycine N-acyltransferase family.

It carries out the reaction an acyl-CoA + L-glutamine = an N(2)-acyl-L-glutamine + CoA + H(+). Functionally, putative acyltransferase which transfers an acyl group to the N-terminus of glutamine. Can use phenylacetyl-CoA as an acyl donor. This is Putative glycine N-acyltransferase-like protein 1B from Homo sapiens (Human).